The sequence spans 495 residues: WD repeat-containing protein 37 (495 aa).

A disordered region spans residues 1 to 34; it reads MPTESGSWAAARQTKQKRKSHSLSIKRTNSSEQD. Over residues 22 to 31 the composition is skewed to polar residues; it reads SLSIKRTNSS. 2 WD repeats span residues 154–194 and 197–236; these read GHRD…CLIK and GHAG…PTPQ. Residues 237–268 are disordered; the sequence is PMADTSQISGEEEVDFSDKDENDGDGDASSDC. Residues 246–264 show a composition bias toward acidic residues; that stretch reads GEEEVDFSDKDENDGDGDA. 5 WD repeats span residues 280–319, 322–361, 366–404, 407–446, and 453–494; these read SHQG…LVHS, GHDQ…IHSV, GHTD…SPIA, RTDS…LARL, and GHRR…LLQE.

The protein localises to the cytoplasm. It localises to the nucleus. This chain is WD repeat-containing protein 37 (wdr37), found in Xenopus laevis (African clawed frog).